A 913-amino-acid chain; its full sequence is Translation initiation factor IF-2 (913 aa).

Residues 1 to 322 (MTDNNDDKTL…QEKFRRSQMQ (322 aa)) are disordered. Residues 60-113 (VQPVVAAPKPAAPAPVAARPQAPQPRIHQPGGQQQRPGSSQSQQRSGSSAPQQR) are compositionally biased toward low complexity. The span at 131 to 180 (MEARRRALMEAQARDVVEAKQRAEDEARRKVEEEQRIAAEKMEAANRAAE) shows a compositional bias: basic and acidic residues. Composition is skewed to low complexity over residues 181 to 195 (EAAA…PAAE), 203 to 238 (ERPA…AAAP), and 261 to 277 (PARG…PAAR). The tr-type G domain occupies 411–578 (SRPPVVTIMG…AILLQAEILD (168 aa)). Residues 420-427 (GHVDHGKT) form a G1 region. 420 to 427 (GHVDHGKT) is a binding site for GTP. Positions 445-449 (GITQH) are G2. A G3 region spans residues 466–469 (DTPG). GTP is bound by residues 466–470 (DTPGH) and 520–523 (NKID). The tract at residues 520 to 523 (NKID) is G4. A G5 region spans residues 556–558 (SAK).

The protein belongs to the TRAFAC class translation factor GTPase superfamily. Classic translation factor GTPase family. IF-2 subfamily.

Its subcellular location is the cytoplasm. One of the essential components for the initiation of protein synthesis. Protects formylmethionyl-tRNA from spontaneous hydrolysis and promotes its binding to the 30S ribosomal subunits. Also involved in the hydrolysis of GTP during the formation of the 70S ribosomal complex. This is Translation initiation factor IF-2 from Agrobacterium fabrum (strain C58 / ATCC 33970) (Agrobacterium tumefaciens (strain C58)).